We begin with the raw amino-acid sequence, 309 residues long: Olfactory receptor 5B2 (309 aa).

The Extracellular portion of the chain corresponds to 1-23 (MENCTEVTKFILLGLTSVPELQI). Residue Asn3 is glycosylated (N-linked (GlcNAc...) asparagine). Residues 24–47 (PLFILFTFIYLLTLCGNLGMMLLI) traverse the membrane as a helical segment. The Cytoplasmic portion of the chain corresponds to 48-55 (LMDSCLHT). A helical membrane pass occupies residues 56–77 (PMYFFLSNLSLVDFGYSSAVTP). Residues 78 to 98 (KVMAGFLRGDKVISYNACAVQ) are Extracellular-facing. Cys95 and Cys187 are disulfide-bonded. A helical membrane pass occupies residues 99-118 (MFFFVALATVENYLLASMAY). Over 119–137 (DRYAAVCKPLHYTTTMTAS) the chain is Cytoplasmic. The helical transmembrane segment at 138-156 (VGACLALGSYVCGFLNASF) threads the bilayer. At 157–193 (HIGGIFSLSFCKSNLVHHFFCDVPAVMALSCSDKHTS) the chain is on the extracellular side. A helical membrane pass occupies residues 194-217 (EVILVFMSSFNIFFVLLVIFISYL). Over 218–234 (FIFITILKMHSAKGHQK) the chain is Cytoplasmic. A helical membrane pass occupies residues 235 to 257 (ALSTCASHFTAVSVFYGTVIFIY). The Extracellular segment spans residues 258–270 (LQPSSSHSMDTDK). A helical transmembrane segment spans residues 271 to 290 (MASVFYAMIIPMLNPVVYSL). The Cytoplasmic segment spans residues 291 to 309 (RNREVQNAFKKVLRRQKFL).

This sequence belongs to the G-protein coupled receptor 1 family.

The protein localises to the cell membrane. Its function is as follows. Odorant receptor. In Homo sapiens (Human), this protein is Olfactory receptor 5B2 (OR5B2).